The primary structure comprises 190 residues: Threonylcarbamoyl-AMP synthase (190 aa).

A YrdC-like domain is found at 7-190 (IGSIAAAVDL…ALTGELFRQG (184 aa)).

It belongs to the SUA5 family. TsaC subfamily.

The protein resides in the cytoplasm. It catalyses the reaction L-threonine + hydrogencarbonate + ATP = L-threonylcarbamoyladenylate + diphosphate + H2O. Required for the formation of a threonylcarbamoyl group on adenosine at position 37 (t(6)A37) in tRNAs that read codons beginning with adenine. Catalyzes the conversion of L-threonine, HCO(3)(-)/CO(2) and ATP to give threonylcarbamoyl-AMP (TC-AMP) as the acyladenylate intermediate, with the release of diphosphate. The sequence is that of Threonylcarbamoyl-AMP synthase from Salmonella typhimurium (strain LT2 / SGSC1412 / ATCC 700720).